The primary structure comprises 246 residues: Chloroplastic group IIB intron splicing facilitator CRS2-A, chloroplastic (246 aa).

The N-terminal 34 residues, 1 to 34, are a transit peptide targeting the chloroplast; the sequence is MFCASSSPITSPLYPKAYKFSQTKSNSKRFSSLR. Tyr-64 lines the tRNA pocket. His-69 serves as the catalytic Proton acceptor. Residues Tyr-114, Asn-116, and Asn-162 each coordinate tRNA.

This sequence belongs to the PTH family. CRS2 subfamily. Part of large ribonucleo-protein complexes that include group IIB introns and either CAF1 or CAF2.

Its subcellular location is the plastid. It localises to the chloroplast stroma. In terms of biological role, required for the splicing of group IIB introns in chloroplasts. The chain is Chloroplastic group IIB intron splicing facilitator CRS2-A, chloroplastic (CRS2A) from Arabidopsis thaliana (Mouse-ear cress).